A 291-amino-acid polypeptide reads, in one-letter code: 33 kDa chaperonin (291 aa).

2 cysteine pairs are disulfide-bonded: C236–C238 and C269–C272.

This sequence belongs to the HSP33 family. In terms of processing, under oxidizing conditions two disulfide bonds are formed involving the reactive cysteines. Under reducing conditions zinc is bound to the reactive cysteines and the protein is inactive.

Its subcellular location is the cytoplasm. Redox regulated molecular chaperone. Protects both thermally unfolding and oxidatively damaged proteins from irreversible aggregation. Plays an important role in the bacterial defense system toward oxidative stress. This is 33 kDa chaperonin from Lactobacillus johnsonii (strain CNCM I-12250 / La1 / NCC 533).